A 118-amino-acid chain; its full sequence is Small ribosomal subunit protein eS24 (118 aa).

Belongs to the eukaryotic ribosomal protein eS24 family.

The polypeptide is Small ribosomal subunit protein eS24 (Sulfolobus acidocaldarius (strain ATCC 33909 / DSM 639 / JCM 8929 / NBRC 15157 / NCIMB 11770)).